Consider the following 311-residue polypeptide: Heme A synthase (311 aa).

The Cytoplasmic portion of the chain corresponds to 1–6 (MQRFIK). Residues 7 to 27 (WLAVITSLDLLIVLLGGALVT) form a helical membrane-spanning segment. Topologically, residues 28-62 (KTGSGQGCGKSWPLCNGEFVPSNLSMETIIELSHR) are extracellular. Cysteines 35 and 42 form a disulfide. Residue Glu58 is part of the active site. His61 is a binding site for heme o. A helical membrane pass occupies residues 63–83 (LTSGSAGILVTLLCILSWKYY). Residues 84 to 91 (KHVRETKT) lie on the Cytoplasmic side of the membrane. The helical transmembrane segment at 92–112 (LAILSFVFLVAQALMGAAAVV) threads the bilayer. The Extracellular segment spans residues 113-121 (WGQMPAVLA). Residues 122–142 (IHFGISLISFASVILLTCLIF) traverse the membrane as a helical segment. His123 lines the heme o pocket. The Cytoplasmic segment spans residues 143–159 (EIDQKFDARSLIMDKKM). A helical membrane pass occupies residues 160-180 (KFHIYGVTIYSYIVVYTGALV). Topologically, residues 181–211 (RHERASLACPDFPLCSKNRPMPTQLHEWVQM) are extracellular. Cys189 and Cys195 are joined by a disulfide. The helical transmembrane segment at 212 to 232 (GHRVAAMLIFAWILYAMILAI) threads the bilayer. His213 is a heme b binding site. Over 233–243 (RHYKQQPVVYW) the chain is Cytoplasmic. A helical transmembrane segment spans residues 244 to 264 (GWIISFILVTLQAIVGILVVF). Topologically, residues 265–271 (TNASLSM) are extracellular. The chain crosses the membrane as a helical span at residues 272–292 (ALLHSLFISCLFAVLCYLVML). A heme b-binding site is contributed by His275. Topologically, residues 293–311 (GTRSKVNAKEAASISKQTK) are cytoplasmic.

Belongs to the COX15/CtaA family. Type 1 subfamily. As to quaternary structure, interacts with CtaB. It depends on heme b as a cofactor.

Its subcellular location is the cell membrane. It catalyses the reaction Fe(II)-heme o + 2 A + H2O = Fe(II)-heme a + 2 AH2. It functions in the pathway porphyrin-containing compound metabolism; heme A biosynthesis; heme A from heme O: step 1/1. Functionally, catalyzes the conversion of heme O to heme A by two successive hydroxylations of the methyl group at C8. The first hydroxylation forms heme I, the second hydroxylation results in an unstable dihydroxymethyl group, which spontaneously dehydrates, resulting in the formyl group of heme A. This Bacillus cereus (strain AH187) protein is Heme A synthase.